The sequence spans 84 residues: Small ribosomal subunit protein bS20 (84 aa).

The segment at 1 to 25 is disordered; sequence MANIVSNEKTYRHTQKVRKENHAKM.

The protein belongs to the bacterial ribosomal protein bS20 family.

Functionally, binds directly to 16S ribosomal RNA. The protein is Small ribosomal subunit protein bS20 of Ureaplasma urealyticum serovar 10 (strain ATCC 33699 / Western).